The sequence spans 474 residues: GTPase Der (474 aa).

EngA-type G domains are found at residues 2–166 (LRIA…NVPE) and 212–385 (LKIA…TTVS). GTP contacts are provided by residues 8–15 (GRPNVGKS), 55–59 (DTGGV), 118–121 (NKAD), 218–225 (GRPNVGKS), 265–269 (DTAGL), and 330–333 (NKWD). Positions 386–470 (SKVPTPVVNK…PFDLEFKEKT (85 aa)) constitute a KH-like domain.

This sequence belongs to the TRAFAC class TrmE-Era-EngA-EngB-Septin-like GTPase superfamily. EngA (Der) GTPase family. Associates with the 50S ribosomal subunit.

Functionally, GTPase that plays an essential role in the late steps of ribosome biogenesis. This Chlamydia abortus (strain DSM 27085 / S26/3) (Chlamydophila abortus) protein is GTPase Der.